Reading from the N-terminus, the 661-residue chain is Arginine--tRNA ligase, cytoplasmic (661 aa).

The segment at 1-72 is could be involved in the assembly of the multisynthetase complex; the sequence is MEARVAEAAA…QEEQSKTVKS (72 aa). L-arginine-binding positions include 201 to 203, His212, Tyr385, Asp389, and Gln413; that span reads SPN. The 'HIGH' region motif lies at 202–213; the sequence is PNIAKEMHVGHL. The interaction with tRNA stretch occupies residues 530 to 544; sequence NTAAYLLYAFTRIRA.

Belongs to the class-I aminoacyl-tRNA synthetase family. As to quaternary structure, monomer; also part of a multisubunit complex that groups tRNA ligases for Arg, Asp, Glu, Gln, Ile, Leu, Lys, Met and Pro.

The protein resides in the cytoplasm. Its subcellular location is the cytosol. The enzyme catalyses tRNA(Arg) + L-arginine + ATP = L-arginyl-tRNA(Arg) + AMP + diphosphate. Its function is as follows. Forms part of a macromolecular complex that catalyzes the attachment of specific amino acids to cognate tRNAs during protein synthesis. In Gallus gallus (Chicken), this protein is Arginine--tRNA ligase, cytoplasmic (RARS1).